We begin with the raw amino-acid sequence, 117 residues long: MKVLVICAVLFLAIFSNSSAETEDDFLEDESFQADDVIPFLASEQVRSDCTLRNHDCTDDRHSCCRSKMFKDVCKCFYPSQRSETDRAKKELCTCQQPKHLKYIEKGLQKAKDYATG.

The N-terminal stretch at 1–20 (MKVLVICAVLFLAIFSNSSA) is a signal peptide. Residues 21-47 (ETEDDFLEDESFQADDVIPFLASEQVR) constitute a propeptide that is removed on maturation. Disulfide bonds link C50–C65, C57–C74, C64–C95, and C76–C93. The propeptide occupies 82 to 87 (RSETDR). T116 is subject to Threonine amide.

The protein belongs to the neurotoxin 19 (CSTX) family. 12 subfamily. In terms of assembly, heterodimer of A and B chains; disulfide-linked. Interacts with CSTX-1 (AC P81694), and with CSTX-9 (AC P58604). As to expression, expressed by the venom gland.

It is found in the secreted. The protein resides in the target cell membrane. Functionally, synergistic toxin that induces or increases a cytolytic effect when combined with CSTX-1 (AC P81694) or CSTX-9 (AC P58604). When alone, has a weak insecticidal activity, with an unknown molecular target. The chain is Toxin CSTX-8 from Cupiennius salei (American wandering spider).